A 310-amino-acid chain; its full sequence is MKLMSGTANPDLSRSIADYLDAPLTASHIERFADGEIFVRIDENVRGEDVFILQSTSRPANDHLMELLICIDALVRASARRITAVIPYFGYARQDRKTGGRTPISAKLVANLIAKAGADRVLTVDLHAGQIQGFFDIPTDNLFATKVMEADIRRHYETDNLLIVSPDVGGVVRARALAKLLDAEIAIVDKRRPKAGVAEVMNIIGEVEGRRCILFDDMCDSGGTLVNAADALLEKGAIEVSAYVTHGVLSKDAQGRVDKSRLRELVVTDSVTEPPNSTATPKVRRLSVAPLLGEAIRRIANDESVSKLFD.

ATP contacts are provided by residues 34–36 (DGE) and 93–94 (RQ). 2 residues coordinate Mg(2+): H127 and D167. K190 is an active-site residue. D-ribose 5-phosphate-binding positions include R192, D216, and 220–224 (DSGGT).

It belongs to the ribose-phosphate pyrophosphokinase family. Class I subfamily. As to quaternary structure, homohexamer. It depends on Mg(2+) as a cofactor.

The protein resides in the cytoplasm. It carries out the reaction D-ribose 5-phosphate + ATP = 5-phospho-alpha-D-ribose 1-diphosphate + AMP + H(+). It participates in metabolic intermediate biosynthesis; 5-phospho-alpha-D-ribose 1-diphosphate biosynthesis; 5-phospho-alpha-D-ribose 1-diphosphate from D-ribose 5-phosphate (route I): step 1/1. In terms of biological role, involved in the biosynthesis of the central metabolite phospho-alpha-D-ribosyl-1-pyrophosphate (PRPP) via the transfer of pyrophosphoryl group from ATP to 1-hydroxyl of ribose-5-phosphate (Rib-5-P). The polypeptide is Ribose-phosphate pyrophosphokinase (Maricaulis maris (strain MCS10) (Caulobacter maris)).